Here is a 306-residue protein sequence, read N- to C-terminus: tRNA dimethylallyltransferase (306 aa).

ATP is bound at residue Gly-14–Ser-21. Thr-16–Ser-21 lines the substrate pocket. The tract at residues Asp-39–Leu-42 is interaction with substrate tRNA.

This sequence belongs to the IPP transferase family. In terms of assembly, monomer. Mg(2+) is required as a cofactor.

The catalysed reaction is adenosine(37) in tRNA + dimethylallyl diphosphate = N(6)-dimethylallyladenosine(37) in tRNA + diphosphate. Functionally, catalyzes the transfer of a dimethylallyl group onto the adenine at position 37 in tRNAs that read codons beginning with uridine, leading to the formation of N6-(dimethylallyl)adenosine (i(6)A). The protein is tRNA dimethylallyltransferase of Synechococcus sp. (strain ATCC 27144 / PCC 6301 / SAUG 1402/1) (Anacystis nidulans).